The sequence spans 409 residues: Putative competence-damage inducible protein (409 aa).

The protein belongs to the CinA family.

This Clostridium botulinum (strain ATCC 19397 / Type A) protein is Putative competence-damage inducible protein.